Here is a 546-residue protein sequence, read N- to C-terminus: CTP synthase (546 aa).

The interval 1–266 (MTTNYIFVTG…DELVCKRFGI (266 aa)) is amidoligase domain. A CTP-binding site is contributed by S14. S14 is a UTP binding site. ATP-binding positions include 15–20 (SLGKGI) and D72. Mg(2+)-binding residues include D72 and E140. Residues 147-149 (DIE), 187-192 (KTKPTQ), and K223 contribute to the CTP site. UTP contacts are provided by residues 187 to 192 (KTKPTQ) and K223. Position 239–241 (239–241 (RDV)) interacts with ATP. The Glutamine amidotransferase type-1 domain maps to 291–542 (TIGMVGKYIE…VKAAGEFQRG (252 aa)). An L-glutamine-binding site is contributed by G352. The active-site Nucleophile; for glutamine hydrolysis is the C379. L-glutamine is bound by residues 380–383 (LGMQ), E403, and R470. Active-site residues include H515 and E517.

The protein belongs to the CTP synthase family. In terms of assembly, homotetramer.

It carries out the reaction UTP + L-glutamine + ATP + H2O = CTP + L-glutamate + ADP + phosphate + 2 H(+). The enzyme catalyses L-glutamine + H2O = L-glutamate + NH4(+). It catalyses the reaction UTP + NH4(+) + ATP = CTP + ADP + phosphate + 2 H(+). The protein operates within pyrimidine metabolism; CTP biosynthesis via de novo pathway; CTP from UDP: step 2/2. Its activity is regulated as follows. Allosterically activated by GTP, when glutamine is the substrate; GTP has no effect on the reaction when ammonia is the substrate. The allosteric effector GTP functions by stabilizing the protein conformation that binds the tetrahedral intermediate(s) formed during glutamine hydrolysis. Inhibited by the product CTP, via allosteric rather than competitive inhibition. Its function is as follows. Catalyzes the ATP-dependent amination of UTP to CTP with either L-glutamine or ammonia as the source of nitrogen. Regulates intracellular CTP levels through interactions with the four ribonucleotide triphosphates. The polypeptide is CTP synthase (Vibrio atlanticus (strain LGP32) (Vibrio splendidus (strain Mel32))).